The chain runs to 230 residues: Ion-translocating oxidoreductase complex subunit E (230 aa).

Transmembrane regions (helical) follow at residues 18–38 (ALVQ…ATNA), 39–59 (LGLG…VSAL), 63–83 (TPAE…VSAV), 86–106 (LINA…PLIV), 125–145 (WLSA…MFVL), and 182–202 (PFLL…MLAV).

This sequence belongs to the NqrDE/RnfAE family. In terms of assembly, the complex is composed of six subunits: RsxA, RsxB, RsxC, RsxD, RsxE and RsxG.

It is found in the cell inner membrane. Its function is as follows. Part of a membrane-bound complex that couples electron transfer with translocation of ions across the membrane. Required to maintain the reduced state of SoxR. In Salmonella agona (strain SL483), this protein is Ion-translocating oxidoreductase complex subunit E.